The primary structure comprises 381 residues: 1-deoxy-D-xylulose 5-phosphate reductoisomerase (381 aa).

NADPH contacts are provided by Ser-10, Gly-11, Ser-12, Ile-13, Gly-36, Lys-37, Asn-38, and Asn-121. Residue Lys-122 participates in 1-deoxy-D-xylulose 5-phosphate binding. Glu-123 lines the NADPH pocket. Asp-147 serves as a coordination point for Mn(2+). Positions 148, 149, 173, and 196 each coordinate 1-deoxy-D-xylulose 5-phosphate. Glu-149 lines the Mn(2+) pocket. Gly-202 contributes to the NADPH binding site. 1-deoxy-D-xylulose 5-phosphate contacts are provided by Ser-209, Asn-214, Lys-215, and Glu-218. Glu-218 lines the Mn(2+) pocket.

It belongs to the DXR family. Mg(2+) serves as cofactor. Requires Mn(2+) as cofactor.

It catalyses the reaction 2-C-methyl-D-erythritol 4-phosphate + NADP(+) = 1-deoxy-D-xylulose 5-phosphate + NADPH + H(+). The protein operates within isoprenoid biosynthesis; isopentenyl diphosphate biosynthesis via DXP pathway; isopentenyl diphosphate from 1-deoxy-D-xylulose 5-phosphate: step 1/6. Catalyzes the NADPH-dependent rearrangement and reduction of 1-deoxy-D-xylulose-5-phosphate (DXP) to 2-C-methyl-D-erythritol 4-phosphate (MEP). The sequence is that of 1-deoxy-D-xylulose 5-phosphate reductoisomerase from Geobacillus sp. (strain WCH70).